The chain runs to 319 residues: MTTEDVIAIRVPTPFAVGDVIVYLVKGDALTLIDAGPNTKEAARALQEQLAAVNVKLSDIEQVVLTHHHADHAGLLDVFSDEIEVIGHTFNEPYISQNQAFMDWQKRFFQKLLPELGVPFDTGKAEKLIRSAYAFSCTRSLTKSIREGMGIDGLEGWSVLEMPGHAESHIVLFHEKSGRMLGGDLLLANSSSNPILEAPKAGDVRSKPLVDYQRSLRRLSQLDPTIVFPGHGEPITSVQALIEKRFDKQRNRTEDVRRMLDEKPMTAFQVCQQLFPAVYEKELFLTMSETAGHLDVLEAEEAITSYWEGNTVYFKTMKR.

Zn(2+) is bound by residues histidine 67, histidine 69, aspartate 71, histidine 72, histidine 165, aspartate 184, and histidine 231.

It belongs to the metallo-beta-lactamase superfamily. Zn(2+) is required as a cofactor.

The polypeptide is Probable metallo-hydrolase YqjP (yqjP) (Bacillus subtilis (strain 168)).